The following is a 27-amino-acid chain: Ganodermin (27 aa).

Has antifungal activity against B.cinera, F.oxysporum and P.piricola with IC(50) values of 15.2 uM, 12.4 uM and 18.1 uM, respectively. Lacks hemagglutinating activity towards rabbit erythrocytes. Lacks deoxyribonuclease, ribonuclease and protease inhibitory activities. In Ganoderma lucidum (Ling zhi medicinal fungus), this protein is Ganodermin.